Here is a 631-residue protein sequence, read N- to C-terminus: Transcription factor dibT (631 aa).

Residues 11-38 (CWTCRLRRKRCDSVQPVCGSCQSLEITC) constitute a DNA-binding region (zn(2)-C6 fungal-type). The span at 123 to 144 (SLADSSASTPSTSSGRPTTLRS) shows a compositional bias: low complexity. Disordered stretches follow at residues 123-148 (SLAD…SVDR) and 469-488 (GLKD…TSAG).

It localises to the nucleus. In terms of biological role, transcription factor; part of the gene cluster that mediates the biosynthesis of pestalotiollide B which is part of dibenzodioxocinones, a novel class of inhibitors against cholesterol ester transfer protein (CEPT). Acts as the key transcription factor within the cluster and positively regulates the expression of the cluster genes and the subsequent production of dibenzodioxocinones such as pestalotiollide B, pestalotiollide C, 1',2'-dehydropenicillide, 3'-methoxy-1',2'-dehydropenicillide and 1',2'-epoxy-3',4'-didehydropenicillide. Required for the expression of most PKS genes outside of the dibenzodioxocinones cluster, (43 out of 48 defined PKS genes), and promotes pigmentation of the mycelium and conidia. The protein is Transcription factor dibT of Pestalotiopsis microspora.